The primary structure comprises 314 residues: Trimethylamine N-oxide-binding protein (314 aa).

The first 24 residues, 1–24 (MKKIVSLMSALVISVVSFAGISNA), serve as a signal peptide directing secretion. Trimethylamine N-oxide-binding residues include Trp-38, Trp-85, Glu-114, Trp-164, and Trp-212.

In terms of assembly, the complex is probably composed of two ATP-binding proteins (TmoW), two transmembrane proteins (TmoV) and a solute-binding protein (TmoX).

It localises to the periplasm. Its function is as follows. Part of the ABC transporter complex TmoXWV involved in trimethylamine N-oxide (TMAO) import. Possesses a high binding affinity toward TMAO, but presents little binding affinity toward betaine, carnitine, trimethylamine (TMA) or dimethylamine (DMA). This is Trimethylamine N-oxide-binding protein from Pelagibacter ubique (strain HTCC1062).